We begin with the raw amino-acid sequence, 603 residues long: Arginine--tRNA ligase (603 aa).

Residues 143–153 (PNIAKEMHVGH) carry the 'HIGH' region motif.

This sequence belongs to the class-I aminoacyl-tRNA synthetase family. As to quaternary structure, monomer.

Its subcellular location is the cytoplasm. It carries out the reaction tRNA(Arg) + L-arginine + ATP = L-arginyl-tRNA(Arg) + AMP + diphosphate. This Prochlorococcus marinus (strain SARG / CCMP1375 / SS120) protein is Arginine--tRNA ligase.